A 351-amino-acid polypeptide reads, in one-letter code: Dihydroorotate dehydrogenase (quinone) (351 aa).

FMN contacts are provided by residues 67-71 (AGFDK) and Thr91. Lys71 lines the substrate pocket. 116–120 (NAMGF) lines the substrate pocket. FMN is bound by residues Asn145 and Asn178. Position 178 (Asn178) interacts with substrate. The active-site Nucleophile is the Ser181. Substrate is bound at residue Asn183. Positions 214 and 242 each coordinate FMN. 243–244 (NT) contacts substrate. Residues Gly262, Gly291, and 312 to 313 (YS) contribute to the FMN site.

Belongs to the dihydroorotate dehydrogenase family. Type 2 subfamily. As to quaternary structure, monomer. Requires FMN as cofactor.

The protein resides in the cell membrane. The enzyme catalyses (S)-dihydroorotate + a quinone = orotate + a quinol. The protein operates within pyrimidine metabolism; UMP biosynthesis via de novo pathway; orotate from (S)-dihydroorotate (quinone route): step 1/1. Its function is as follows. Catalyzes the conversion of dihydroorotate to orotate with quinone as electron acceptor. This Helicobacter pylori (strain Shi470) protein is Dihydroorotate dehydrogenase (quinone).